The sequence spans 820 residues: Trimethylamine-N-oxide reductase (820 aa).

Residues 1 to 33 (MAITRRSFLKGVATTSAASIIGPSLLTSVSAQA) constitute a signal peptide (tat-type signal). S179 provides a ligand contact to Mo-bis(molybdopterin guanine dinucleotide).

The protein belongs to the prokaryotic molybdopterin-containing oxidoreductase family. Requires Mo-bis(molybdopterin guanine dinucleotide) as cofactor. In terms of processing, predicted to be exported by the Tat system. The position of the signal peptide cleavage has not been experimentally proven.

Its subcellular location is the periplasm. The catalysed reaction is trimethylamine + 2 Fe(III)-[cytochrome c] + H2O = trimethylamine N-oxide + 2 Fe(II)-[cytochrome c] + 3 H(+). Reduces trimethylamine-N-oxide (TMAO) into trimethylamine; an anaerobic reaction coupled to energy-yielding reactions. This is Trimethylamine-N-oxide reductase (torA) from Vibrio cholerae serotype O1 (strain ATCC 39315 / El Tor Inaba N16961).